Consider the following 142-residue polypeptide: Transcriptional regulator MraZ (142 aa).

SpoVT-AbrB domains are found at residues 5–51 (ASAL…PRPE) and 77–120 (AMDV…DAQT).

Belongs to the MraZ family. As to quaternary structure, forms oligomers.

The protein localises to the cytoplasm. The protein resides in the nucleoid. This is Transcriptional regulator MraZ from Paraburkholderia phytofirmans (strain DSM 17436 / LMG 22146 / PsJN) (Burkholderia phytofirmans).